The primary structure comprises 318 residues: N-acyl-aromatic-L-amino acid amidohydrolase (carboxylate-forming) (318 aa).

The hydrolytic domain stretch occupies residues 1–210 (MSSLPGSREP…ILDFIELFNQ (210 aa)). Residues His21 and Glu24 each coordinate Zn(2+). Substrate contacts are provided by residues Arg63 and 70-71 (NR). His116 provides a ligand contact to Zn(2+). Positions 177 and 287 each coordinate substrate. The shielding domain stretch occupies residues 211–318 (GMDLPAFEMD…RLTPRSTQTP (108 aa)). Thr317 bears the Phosphothreonine mark.

It belongs to the AspA/AstE family. Aspartoacylase subfamily. As to quaternary structure, exists as a mixture of homodimers and homotetramer, both catalytically active. The cofactor is Zn(2+). In terms of tissue distribution, expressed predominantly in kidney and to a lesser extent in liver. Weakly expressed in heart, small intestine, brain, lung, testis, and stomach.

Its subcellular location is the apical cell membrane. It localises to the cytoplasm. The enzyme catalyses an N-acyl-aromatic L-alpha-amino acid + H2O = an aromatic L-alpha-amino acid + a carboxylate. It carries out the reaction an N-acetyl-L-cysteine-S-conjugate + H2O = an S-substituted L-cysteine + acetate. Functionally, plays an important role in deacetylating mercapturic acids in kidney proximal tubules. Also acts on N-acetyl-aromatic amino acids. The polypeptide is N-acyl-aromatic-L-amino acid amidohydrolase (carboxylate-forming) (Acy3) (Mus musculus (Mouse)).